A 430-amino-acid chain; its full sequence is MKQAFRVALSVLMLFVAVAHAEVRIEITQGVNTARPIGVVPFKWDGPGAAPEDIGGIVAADLRNSGKFNPIDRARLPQQPTSVAEVQPAAWTALGIDAVVVGQVQPGADGSYTVSYQLVDTSGNPGAVLAQNQFKVTKQWLRYAAHSASDESFEKLTAIKGAFRTRIAYVVQTNGGQFPYELRVSDYDGYNQFVVHRSPQPLMSPAWSPDGSKVAYVTFESGKSALVIQTLANGAIRQVASFPRHNGAPSFSPDGSKLAFALSKTGSLNIYVMDIGSGQISQITDGRYNSTEPTWFPDSQSLAYTSDQAGRPQIYKIGVNGGTAQRITWEGAQNQDADVSSDGKSMVMISTNSGAQHVARQDLVTGAVQKLTDTFLDETPSLAPNGTMVIYSSTQGMGSVLQLVSTDGRFKARLPATDGQVKFPAWSPYL.

An N-terminal signal peptide occupies residues 1 to 21 (MKQAFRVALSVLMLFVAVAHA).

This sequence belongs to the TolB family. The Tol-Pal system is composed of five core proteins: the inner membrane proteins TolA, TolQ and TolR, the periplasmic protein TolB and the outer membrane protein Pal. They form a network linking the inner and outer membranes and the peptidoglycan layer.

It is found in the periplasm. In terms of biological role, part of the Tol-Pal system, which plays a role in outer membrane invagination during cell division and is important for maintaining outer membrane integrity. TolB occupies a key intermediary position in the Tol-Pal system because it communicates directly with both membrane-embedded components, Pal in the outer membrane and TolA in the inner membrane. The chain is Tol-Pal system protein TolB from Erwinia tasmaniensis (strain DSM 17950 / CFBP 7177 / CIP 109463 / NCPPB 4357 / Et1/99).